Reading from the N-terminus, the 270-residue chain is Regulatory protein RecX (270 aa).

Belongs to the RecX family.

It localises to the cytoplasm. Modulates RecA activity. The protein is Regulatory protein RecX of Bacillus anthracis (strain A0248).